Reading from the N-terminus, the 237-residue chain is Class B acid phosphatase (237 aa).

The N-terminal stretch at 1-25 (MRKVSLALSAACLLFTLNYTASALA) is a signal peptide. Asp69 serves as the catalytic Nucleophile. Asp69 and Asp71 together coordinate Mg(2+). Asp71 functions as the Proton donor in the catalytic mechanism. Substrate is bound by residues 137-138 (TG) and Lys177. Asp192 serves as a coordination point for Mg(2+).

This sequence belongs to the class B bacterial acid phosphatase family. Homotetramer. Requires Mg(2+) as cofactor.

The protein resides in the periplasm. The enzyme catalyses a phosphate monoester + H2O = an alcohol + phosphate. In terms of biological role, dephosphorylates several organic phosphate monoesters. Also has a phosphotransferase activity catalyzing the transfer of low-energy phosphate groups from organic phosphate monoesters to free hydroxyl groups of various organic compounds. This is Class B acid phosphatase from Citrobacter rodentium (strain ICC168) (Citrobacter freundii biotype 4280).